Consider the following 449-residue polypeptide: L10-interacting MYB domain-containing protein (449 aa).

In terms of domain architecture, Myb-like spans 162–225 (SNPQTKGYWS…YTRPQLKNHW (64 aa)). The interval 297–324 (TYTPPSRSRKKLLHNRSESPQWRDTTPL) is disordered. A compositionally biased stretch (polar residues) spans 314–324 (ESPQWRDTTPL).

In terms of assembly, interacts with RPL10A. As to expression, expressed in seedlings, leaves, roots, stems and flowers.

Its subcellular location is the nucleus. Functionally, transcriptional repressor that associates with ribosomal protein promoters. This chain is L10-interacting MYB domain-containing protein, found in Arabidopsis thaliana (Mouse-ear cress).